A 494-amino-acid chain; its full sequence is MKKQAFSSEQYLNLQRDHILERINQFDGKLYLEFGGKMLEDFHAARVLPGYEPDNKIKLLQELKEQVEVVIAINASNIEHSKARGDLGISYDQEVLRLIDKFNELGIFVGSVVITQYAGQPAADAFRNQLEKNGIDSYLHYPIKGYPTDMDHIISPEGMGKNDYIKTSRNLIVVTAPGPGSGKLATCMSNMYHDQINGIKSGYAKFETFPVWNLPLHHPVNLAYEAATADLDDVNMIDPFHLQTYGETTVNYNRDIEIFPVLKRMLERILGKSPYASPTDMGVNMVGFAITDDEAAVEASKQEIIRRYYQTVLDFKAEKVGEAAVKKIELLMNDLGITPADRKVAVVARQKAEETGGPALAFELPNGEIVTGKNSELFGPTAAALINAIKKSADIAKEVKLIEPEVVKPIQGLKIDHLGSRNPRLHSNEILIALAITATENPDAARAMEELGNLKGSEAHSTIILTDEDKNVLRKLGINVTFDPYYQYDRLYRK.

Belongs to the UPF0371 family.

The sequence is that of UPF0371 protein SP70585_0405 from Streptococcus pneumoniae (strain 70585).